A 596-amino-acid polypeptide reads, in one-letter code: ATP-binding protein Uup (596 aa).

ABC transporter domains are found at residues 1–222 (MSLI…RIEK) and 290–516 (FKLD…SKIN). ATP contacts are provided by residues 36-43 (GKNGAGKS) and 322-329 (GDNGCGKS). The segment at 519-596 (IKIKNNFKKE…LEKNIINTKI (78 aa)) is C-terminal domain (CTD), binds DNA.

It belongs to the ABC transporter superfamily. ABCF family. Uup subfamily.

It localises to the cytoplasm. It catalyses the reaction ATP + H2O = ADP + phosphate + H(+). Its function is as follows. Probably plays a role in ribosome assembly or function. May be involved in resolution of branched DNA intermediates that result from template switching in postreplication gaps. Binds DNA and has ATPase activity. This Buchnera aphidicola subsp. Acyrthosiphon pisum (strain APS) (Acyrthosiphon pisum symbiotic bacterium) protein is ATP-binding protein Uup.